A 139-amino-acid polypeptide reads, in one-letter code: Ribulose bisphosphate carboxylase small subunit (139 aa).

This sequence belongs to the RuBisCO small chain family. Heterohexadecamer of 8 large and 8 small subunits.

The protein resides in the plastid. It localises to the chloroplast. Its function is as follows. RuBisCO catalyzes two reactions: the carboxylation of D-ribulose 1,5-bisphosphate, the primary event in carbon dioxide fixation, as well as the oxidative fragmentation of the pentose substrate in the photorespiration process. Both reactions occur simultaneously and in competition at the same active site. Although the small subunit is not catalytic it is essential for maximal activity. This Ectocarpus siliculosus (Brown alga) protein is Ribulose bisphosphate carboxylase small subunit.